Reading from the N-terminus, the 101-residue chain is NAD(P)H-quinone oxidoreductase subunit 4L, chloroplastic (101 aa).

The next 3 membrane-spanning stretches (helical) occupy residues 2-22 (ILEHVLVLSAYLFLIGLYGLI), 32-52 (MCLELILNAVNMNFVTFSDFF), and 61-81 (IFCIFVIAIAAAEAAIGLAIV).

The protein belongs to the complex I subunit 4L family. In terms of assembly, NDH is composed of at least 16 different subunits, 5 of which are encoded in the nucleus.

The protein localises to the plastid. It localises to the chloroplast thylakoid membrane. The enzyme catalyses a plastoquinone + NADH + (n+1) H(+)(in) = a plastoquinol + NAD(+) + n H(+)(out). It carries out the reaction a plastoquinone + NADPH + (n+1) H(+)(in) = a plastoquinol + NADP(+) + n H(+)(out). Functionally, NDH shuttles electrons from NAD(P)H:plastoquinone, via FMN and iron-sulfur (Fe-S) centers, to quinones in the photosynthetic chain and possibly in a chloroplast respiratory chain. The immediate electron acceptor for the enzyme in this species is believed to be plastoquinone. Couples the redox reaction to proton translocation, and thus conserves the redox energy in a proton gradient. The sequence is that of NAD(P)H-quinone oxidoreductase subunit 4L, chloroplastic from Olimarabidopsis pumila (Dwarf rocket).